The primary structure comprises 630 residues: Pentatricopeptide repeat-containing protein At1g26460, mitochondrial (630 aa).

The N-terminal 115 residues, 1-115 (MASHLFTRSR…RALSETLDMN (115 aa)), are a transit peptide targeting the mitochondrion. The disordered stretch occupies residues 42 to 79 (LLATESTDHDPSNHQSTSTPLPPNPATGSPLYQENWRS). The span at 67 to 77 (ATGSPLYQENW) shows a compositional bias: polar residues. PPR repeat units lie at residues 154-189 (DVNL…SVEP), 190-224 (NTAS…GKDS), 227-261 (DDES…GYML), 468-503 (SVAA…GLTP), 504-538 (NIDS…GVKP), and 539-573 (DSRT…GFEP).

The protein belongs to the PPR family. P subfamily.

It localises to the mitochondrion. This is Pentatricopeptide repeat-containing protein At1g26460, mitochondrial from Arabidopsis thaliana (Mouse-ear cress).